The following is a 488-amino-acid chain: Monodehydroascorbate reductase 4, peroxisomal (488 aa).

Over 1 to 3 (MGR) the chain is Cytoplasmic. Residues 4–24 (AFVYVILGGGVAAGYAALEFT) traverse the membrane as a helical segment. FAD is bound by residues 12-15 (GGVA), E39, R46, K51, and 145-146 (RD). Over 25-458 (RRGVSDGELC…SASVVMIKKP (434 aa)) the chain is Peroxisomal. Residues 170–176 (GGYIGME), E194, R200, and G259 each bind NAD(+). 172–176 (YIGME) is an NADP(+) binding site. NADP(+) is bound by residues R200 and G259. D296 lines the FAD pocket. 312–313 (EH) serves as a coordination point for NAD(+). 312–313 (EH) lines the NADP(+) pocket. V314 is an FAD binding site. R318 is a binding site for L-ascorbate. Y344 contributes to the FAD binding site. Residue Y344 coordinates NAD(+). Residue Y344 participates in NADP(+) binding. R346 serves as a coordination point for L-ascorbate. The chain crosses the membrane as a helical span at residues 459-479 (LYVWHAATGVVVAASVAAFAF). Residues 480 to 488 (WYGRRRRRW) lie on the Cytoplasmic side of the membrane.

It belongs to the FAD-dependent oxidoreductase family. It depends on FAD as a cofactor.

The protein localises to the peroxisome membrane. It carries out the reaction 2 monodehydro-L-ascorbate radical + NADH + H(+) = 2 L-ascorbate + NAD(+). Catalyzes the conversion of monodehydroascorbate to ascorbate, oxidizing NADH in the process. Involved in the detoxification of H(2)O(2) that escapes the peroxisome and causes oxidative damage to oil bodies. This Arabidopsis thaliana (Mouse-ear cress) protein is Monodehydroascorbate reductase 4, peroxisomal.